The chain runs to 269 residues: Chymotrypsin-like elastase family member 3B (269 aa).

A signal peptide spans M1–G16. A propeptide spans C17–R27 (activation peptide). The Peptidase S1 domain maps to V28–A267. A disulfide bridge links C57 with C73. Active-site charge relay system residues include H72 and D122. 3 cysteine pairs are disulfide-bonded: C156–C222, C187–C203, and C212–C243. Residue S216 is the Charge relay system of the active site.

This sequence belongs to the peptidase S1 family. Elastase subfamily.

It catalyses the reaction Preferential cleavage: Ala-|-Xaa. Does not hydrolyze elastin.. Its function is as follows. Efficient protease with alanine specificity but only little elastolytic activity. This is Chymotrypsin-like elastase family member 3B (Cela3b) from Mus musculus (Mouse).